The chain runs to 2067 residues: Negative regulator of mitosis (2067 aa).

Over residues Ser100–Glu118 the composition is skewed to polar residues. 3 disordered regions span residues Ser100–Lys132, Glu332–Ala408, and Gly452–Pro480. The Nuclear localization signal motif lies at Ser336–Gly347. A compositionally biased stretch (basic residues) spans Ser336–Ser355. Over residues Trp384–Thr396 the composition is skewed to polar residues. 4 PC repeats span residues Ala1434 to Glu1465, Ala1482 to Val1520, Gly1532 to Phe1562, and Gly1625 to Leu1659. Residues Phe2020 to His2042 form a disordered region.

It belongs to the APC1 family.

Functionally, negative regulator of mitosis in E.nidulans. This protein is part of a regulatory pathway that includes the nimA protein kinase. It is required to prevent premature entry into mitosis. Mutations to this protein both cause cells to enter mitosis and prevent them from leaving mitosis. This chain is Negative regulator of mitosis (bimE), found in Emericella nidulans (strain FGSC A4 / ATCC 38163 / CBS 112.46 / NRRL 194 / M139) (Aspergillus nidulans).